The chain runs to 221 residues: Uracil-DNA glycosylase (221 aa).

D65 (proton acceptor) is an active-site residue.

This sequence belongs to the uracil-DNA glycosylase (UDG) superfamily. UNG family.

It localises to the cytoplasm. It catalyses the reaction Hydrolyzes single-stranded DNA or mismatched double-stranded DNA and polynucleotides, releasing free uracil.. Its function is as follows. Excises uracil residues from the DNA which can arise as a result of misincorporation of dUMP residues by DNA polymerase or due to deamination of cytosine. The polypeptide is Uracil-DNA glycosylase (Flavobacterium johnsoniae (strain ATCC 17061 / DSM 2064 / JCM 8514 / BCRC 14874 / CCUG 350202 / NBRC 14942 / NCIMB 11054 / UW101) (Cytophaga johnsonae)).